Consider the following 251-residue polypeptide: Triosephosphate isomerase (251 aa).

9–11 is a binding site for substrate; that stretch reads NWK. The active-site Electrophile is the His96. Glu167 acts as the Proton acceptor in catalysis. Residues Gly173, Ser213, and 234–235 contribute to the substrate site; that span reads GG.

Belongs to the triosephosphate isomerase family. In terms of assembly, homodimer.

The protein resides in the cytoplasm. It catalyses the reaction D-glyceraldehyde 3-phosphate = dihydroxyacetone phosphate. It participates in carbohydrate biosynthesis; gluconeogenesis. Its pathway is carbohydrate degradation; glycolysis; D-glyceraldehyde 3-phosphate from glycerone phosphate: step 1/1. Functionally, involved in the gluconeogenesis. Catalyzes stereospecifically the conversion of dihydroxyacetone phosphate (DHAP) to D-glyceraldehyde-3-phosphate (G3P). The sequence is that of Triosephosphate isomerase from Bacteroides fragilis (strain ATCC 25285 / DSM 2151 / CCUG 4856 / JCM 11019 / LMG 10263 / NCTC 9343 / Onslow / VPI 2553 / EN-2).